We begin with the raw amino-acid sequence, 544 residues long: CTP synthase (544 aa).

The amidoligase domain stretch occupies residues 1–267 (MAKFVFVTGG…CRQVLDVLSL (267 aa)). Ser-13 provides a ligand contact to CTP. Ser-13 serves as a coordination point for UTP. ATP is bound by residues 14-19 (SIGKGI) and Asp-71. Residues Asp-71 and Glu-141 each contribute to the Mg(2+) site. CTP-binding positions include 148 to 150 (DIE), 188 to 193 (KTKPTQ), and Lys-224. Residues 188-193 (KTKPTQ) and Lys-224 each bind UTP. Residues 292-534 (KVALVGKYVQ…IQAASQRLPQ (243 aa)) enclose the Glutamine amidotransferase type-1 domain. Residue Gly-354 coordinates L-glutamine. Cys-381 functions as the Nucleophile; for glutamine hydrolysis in the catalytic mechanism. L-glutamine contacts are provided by residues 382-385 (LGMQ), Glu-405, and Arg-462. Active-site residues include His-507 and Glu-509.

This sequence belongs to the CTP synthase family. Homotetramer.

It carries out the reaction UTP + L-glutamine + ATP + H2O = CTP + L-glutamate + ADP + phosphate + 2 H(+). The catalysed reaction is L-glutamine + H2O = L-glutamate + NH4(+). The enzyme catalyses UTP + NH4(+) + ATP = CTP + ADP + phosphate + 2 H(+). It functions in the pathway pyrimidine metabolism; CTP biosynthesis via de novo pathway; CTP from UDP: step 2/2. Its activity is regulated as follows. Allosterically activated by GTP, when glutamine is the substrate; GTP has no effect on the reaction when ammonia is the substrate. The allosteric effector GTP functions by stabilizing the protein conformation that binds the tetrahedral intermediate(s) formed during glutamine hydrolysis. Inhibited by the product CTP, via allosteric rather than competitive inhibition. Functionally, catalyzes the ATP-dependent amination of UTP to CTP with either L-glutamine or ammonia as the source of nitrogen. Regulates intracellular CTP levels through interactions with the four ribonucleotide triphosphates. This Synechococcus sp. (strain RCC307) protein is CTP synthase.